Reading from the N-terminus, the 803-residue chain is Translation initiation factor IF-2 (803 aa).

Disordered stretches follow at residues 95-125 and 138-178; these read PVVEQKRETEPAPTQEVPLTSDTTNLNEKAE and EVKE…EREE. Over residues 111–121 the composition is skewed to polar residues; that stretch reads VPLTSDTTNLN. Over residues 138–155 the composition is skewed to basic and acidic residues; it reads EVKEEAKKTPSEKKETPK. A compositionally biased stretch (basic residues) spans 156-167; the sequence is KGPRKETRRSRK. Positions 168–178 are enriched in basic and acidic residues; the sequence is PDKEDKWEREE. Residues 302 to 471 enclose the tr-type G domain; that stretch reads PRAPVVTIMG…LLQAEVLELK (170 aa). Residues 311-318 form a G1 region; sequence GHVDHGKT. 311–318 is a binding site for GTP; sequence GHVDHGKT. The interval 336–340 is G2; sequence GITQH. A G3 region spans residues 357-360; it reads DTPG. GTP contacts are provided by residues 357–361 and 411–414; these read DTPGH and NKID. The G4 stretch occupies residues 411–414; it reads NKID. Residues 447–449 form a G5 region; the sequence is SAK.

This sequence belongs to the TRAFAC class translation factor GTPase superfamily. Classic translation factor GTPase family. IF-2 subfamily.

It localises to the cytoplasm. Its function is as follows. One of the essential components for the initiation of protein synthesis. Protects formylmethionyl-tRNA from spontaneous hydrolysis and promotes its binding to the 30S ribosomal subunits. Also involved in the hydrolysis of GTP during the formation of the 70S ribosomal complex. The protein is Translation initiation factor IF-2 of Coxiella burnetii (strain Dugway 5J108-111).